The chain runs to 669 residues: Cell surface receptor daf-1 (669 aa).

An N-terminal signal peptide occupies residues Met-1–Thr-19. Residues Ser-20–Trp-170 are Extracellular-facing. 4 N-linked (GlcNAc...) asparagine glycosylation sites follow: Asn-49, Asn-79, Asn-133, and Asn-154. Residues Leu-171–Leu-191 form a helical membrane-spanning segment. Residues Thr-192 to Gly-669 lie on the Cytoplasmic side of the membrane. The GS domain maps to Asn-262–Gln-292. Positions Ile-293–Leu-593 constitute a Protein kinase domain. ATP-binding positions include Val-299–Val-307 and Lys-320. The Proton acceptor role is filled by Asp-423. 2 stretches are compositionally biased toward basic and acidic residues: residues Asp-611–Ser-624 and Val-633–Ala-650. A disordered region spans residues Asp-611–Gly-669. The segment covering Lys-651 to Asp-661 has biased composition (polar residues).

The protein belongs to the protein kinase superfamily. TKL Ser/Thr protein kinase family. TGFB receptor subfamily. In terms of assembly, may interact with daf-4 to regulate dauer larva development. As to expression, head and ventral nerve cord from embryos to adults. Expressed in many sensory neurons. Subset of head neurons show coexpression with daf-4 when dauer/nondauer decision is made. Also expressed in non-neuronal cells: membraneous sheath surrounding the distal end of the intestine and in the distal tip cell of the gonad.

It localises to the membrane. The catalysed reaction is L-threonyl-[receptor-protein] + ATP = O-phospho-L-threonyl-[receptor-protein] + ADP + H(+). It carries out the reaction L-seryl-[receptor-protein] + ATP = O-phospho-L-seryl-[receptor-protein] + ADP + H(+). In terms of biological role, probably involved in a TGF-beta pathway. May be a receptor for TGF-beta-like ligand daf-7. Controls the decision of whether or not larvae enter a developmentally arrested state, known as dauer, in response to environmental conditions. Involved in regulating entry into quiescence triggered by satiety. Involved in sensitivity to CO2 levels. In AWC neurons, acts to promote expression of srsx-3, a member of the GPCR family. The chain is Cell surface receptor daf-1 (daf-1) from Caenorhabditis elegans.